Consider the following 238-residue polypeptide: tRNA (guanine-N(1)-)-methyltransferase (238 aa).

S-adenosyl-L-methionine is bound by residues glycine 110 and 129 to 134 (LGDFIL).

This sequence belongs to the RNA methyltransferase TrmD family. Homodimer.

The protein resides in the cytoplasm. The enzyme catalyses guanosine(37) in tRNA + S-adenosyl-L-methionine = N(1)-methylguanosine(37) in tRNA + S-adenosyl-L-homocysteine + H(+). Specifically methylates guanosine-37 in various tRNAs. This chain is tRNA (guanine-N(1)-)-methyltransferase, found in Clostridium botulinum (strain Alaska E43 / Type E3).